We begin with the raw amino-acid sequence, 578 residues long: Rhoptry protein 4 (578 aa).

The signal sequence occupies residues 1–33 (MGHPTSFGQPSCLVWLAAAFLVLGLCLVQQGAG). The segment at 56-82 (VDKYSRDSTEGENTVSEGEAEGSRGGS) is disordered. In terms of domain architecture, Protein kinase spans 259–546 (LVRGRRIGLF…ALQAIETPEY (288 aa)). The disordered stretch occupies residues 559-578 (LYSGDGTLTGGDDDMPPLET). Residues 569 to 578 (GDDDMPPLET) show a composition bias toward acidic residues.

In terms of processing, phosphorylated on multiple serine and threonine residues in parasitic extracts and infected cells but not in extracellular parasites.

Its subcellular location is the secreted. The protein localises to the parasitophorous vacuole membrane. Functionally, thought to play a role in parasitophorous vacuole membrane function during the infection of host organisms. This Toxoplasma gondii protein is Rhoptry protein 4.